An 87-amino-acid polypeptide reads, in one-letter code: Phytosulfokines 1 (87 aa).

Residues 1–24 form the signal peptide; sequence MMKTKSEVLIFFFTLVLLLSMASS. The propeptide occupies 25–76; sequence VILREDGFAPPKPSPTTHEKASTKGDRDGVECKNSDSEEECLVKKTVAAHTD. Positions 31-59 are disordered; sequence GFAPPKPSPTTHEKASTKGDRDGVECKNS. A compositionally biased stretch (basic and acidic residues) spans 41–59; it reads THEKASTKGDRDGVECKNS. Tyrosine 77 and tyrosine 79 each carry sulfotyrosine. Positions 82-87 are excised as a propeptide; that stretch reads DLNLSP.

It belongs to the phytosulfokine family. Post-translationally, sulfation is important for activity and for the binding to a putative membrane receptor. In terms of processing, PSK-beta is produced from PSK-alpha by exopeptidase digestion. As to expression, expressed only in roots.

Its subcellular location is the secreted. In terms of biological role, promotes plant cell differentiation, organogenesis and somatic embryogenesis as well as cell proliferation. This chain is Phytosulfokines 1 (PSK1), found in Arabidopsis thaliana (Mouse-ear cress).